The sequence spans 904 residues: Alanine--tRNA ligase (904 aa).

Zn(2+)-binding residues include His-600, His-604, Cys-704, and His-708.

It belongs to the class-II aminoacyl-tRNA synthetase family. Requires Zn(2+) as cofactor.

The protein resides in the cytoplasm. It carries out the reaction tRNA(Ala) + L-alanine + ATP = L-alanyl-tRNA(Ala) + AMP + diphosphate. In terms of biological role, catalyzes the attachment of alanine to tRNA(Ala) in a two-step reaction: alanine is first activated by ATP to form Ala-AMP and then transferred to the acceptor end of tRNA(Ala). Also edits incorrectly charged Ser-tRNA(Ala) and Gly-tRNA(Ala) via its editing domain. The chain is Alanine--tRNA ligase from Metallosphaera sedula (strain ATCC 51363 / DSM 5348 / JCM 9185 / NBRC 15509 / TH2).